Reading from the N-terminus, the 136-residue chain is Non-structural protein 1 (136 aa).

Belongs to the pneumovirus non-structural protein 1 family. In terms of assembly, monomer. Homomultimer. Heteromultimer with NS2. Interacts with the matrix protein M. Interacts with host ELOC and CUL2; this interaction allows NS1 to form an active E3 ligase with ELOC and CUL2. Interacts with host IRF3; this interaction leads to the disrupted association of IRF3 with CREBBP and thus reduced binding of IRF3 to the IFN-beta promoter. Interacts with host MAVS; this interaction prevents MAVS binding to RIGI and inhibits signaling pathway leading to interferon production. Interacts with host TRIM25 (via SPRY domain); this interaction suppresses RIGI ubiquitination and results in decreased interaction between RIGI and MAVS.

Its subcellular location is the host cytoplasm. It is found in the host mitochondrion. The protein localises to the host nucleus. Functionally, plays a major role in antagonizing the type I IFN-mediated antiviral response by degrading or inhibiting multiple cellular factors required for either IFN induction or response pathways. Acts cooperatively with NS2 to repress activation and nuclear translocation of host IFN-regulatory factor IRF3. Also disrupts the association of IRF3 with CREBBP. Interacts with host mitochondrial-associated membrane (MAM) MAVS and prevents the interaction with RIGI. Interacts with TRIM25 to suppress TRIM25-mediated RIGI ubiquitination and thereby RIGI-MAVS interaction. Together with NS2, participates in the proteasomal degradation of host STAT2, IRF3, IRF7, TBK1 and RIGI through a NS-degradasome involving CUL2 and Elongin-C. The degradasome requires an intact mitochondrial MAVS. Decreases the levels of host TRAF3 and IKBKE/IKK-epsilon. As functions other than disruptions of the type I IFN-mediated antiviral signaling pathways, induces host SOCS1 and SOCS3 expression. Suppresses premature apoptosis by an NF-kappa-B-dependent, interferon-independent mechanism and thus facilitates virus growth. Additionally, NS1 may serve some inhibitory role in viral transcription and RNA replication. Suppresses proliferation and activation of host CD103+ CD8+ cytotoxic T-lymphocytes and Th17 helper T-lymphocytes. This chain is Non-structural protein 1 (1C), found in Ovis aries (Sheep).